The primary structure comprises 367 residues: DNA replication and repair protein RecF (367 aa).

Residue Gly-30 to Thr-37 coordinates ATP.

It belongs to the RecF family.

The protein resides in the cytoplasm. The RecF protein is involved in DNA metabolism; it is required for DNA replication and normal SOS inducibility. RecF binds preferentially to single-stranded, linear DNA. It also seems to bind ATP. This chain is DNA replication and repair protein RecF, found in Pseudomonas putida (strain W619).